The chain runs to 131 residues: Type-5 thionin (131 aa).

Positions 1 to 29 are cleaved as a signal peptide; the sequence is MGGGQKGLESAIVCLLVLGLVLEQVQVEG. The propeptide at 67–131 is acidic domain; it reads LASVRSSDEP…GDTLLASLDD (65 aa).

Belongs to the plant thionin (TC 1.C.44) family. In terms of processing, is disulfide-linked. In terms of tissue distribution, developing endosperm.

The protein localises to the secreted. Functionally, thionins are small plant proteins which are toxic to animal cells. They seem to exert their toxic effect at the level of the cell membrane. Their precise function is not known. This chain is Type-5 thionin (TTHV), found in Triticum aestivum (Wheat).